The primary structure comprises 168 residues: Nicotinamide-nucleotide adenylyltransferase (168 aa).

It belongs to the archaeal NMN adenylyltransferase family.

The protein resides in the cytoplasm. The enzyme catalyses beta-nicotinamide D-ribonucleotide + ATP + H(+) = diphosphate + NAD(+). It functions in the pathway cofactor biosynthesis; NAD(+) biosynthesis; NAD(+) from nicotinamide D-ribonucleotide: step 1/1. This Methanoculleus marisnigri (strain ATCC 35101 / DSM 1498 / JR1) protein is Nicotinamide-nucleotide adenylyltransferase.